The chain runs to 263 residues: N-acyl homoserine lactonase AttM (263 aa).

Histidine 103, histidine 105, aspartate 107, histidine 108, histidine 180, aspartate 202, and histidine 247 together coordinate Zn(2+).

This sequence belongs to the metallo-beta-lactamase superfamily. It depends on Zn(2+) as a cofactor.

The catalysed reaction is an N-acyl-L-homoserine lactone + H2O = an N-acyl-L-homoserine + H(+). This Rhizobium johnstonii (strain DSM 114642 / LMG 32736 / 3841) (Rhizobium leguminosarum bv. viciae) protein is N-acyl homoserine lactonase AttM.